The sequence spans 207 residues: Guanylate kinase (207 aa).

The 179-residue stretch at 5–183 (GTLYIISAPS…ALYELEAIVE (179 aa)) folds into the Guanylate kinase-like domain. 12–19 (APSGAGKT) contacts ATP.

The protein belongs to the guanylate kinase family.

The protein resides in the cytoplasm. It catalyses the reaction GMP + ATP = GDP + ADP. Functionally, essential for recycling GMP and indirectly, cGMP. This is Guanylate kinase from Alcanivorax borkumensis (strain ATCC 700651 / DSM 11573 / NCIMB 13689 / SK2).